A 142-amino-acid polypeptide reads, in one-letter code: Type IV pilus subunit protein TapA (142 aa).

A propeptide spans 1-6 (MKKQSG) (leader sequence). The residue at position 7 (F7) is an N-methylphenylalanine. Residues 7 to 27 (FTLIELMIVVAIVAILAAIAL) traverse the membrane as a helical segment.

The protein belongs to the N-Me-Phe pilin family.

The protein localises to the membrane. Functionally, major component of the type IV (TAP) pilus. Aeromonas hydrophila possesses two distinct families of type IV pili: the bundle-forming pilus (Bfp) and the type IV pilus (Tap). In Aeromonas hydrophila, this protein is Type IV pilus subunit protein TapA (tapA).